A 415-amino-acid polypeptide reads, in one-letter code: Serine hydroxymethyltransferase (415 aa).

Residues L119 and G123–L125 contribute to the (6S)-5,6,7,8-tetrahydrofolate site. K228 is subject to N6-(pyridoxal phosphate)lysine.

This sequence belongs to the SHMT family. In terms of assembly, homodimer. Pyridoxal 5'-phosphate serves as cofactor.

It is found in the cytoplasm. The catalysed reaction is (6R)-5,10-methylene-5,6,7,8-tetrahydrofolate + glycine + H2O = (6S)-5,6,7,8-tetrahydrofolate + L-serine. It participates in one-carbon metabolism; tetrahydrofolate interconversion. Its pathway is amino-acid biosynthesis; glycine biosynthesis; glycine from L-serine: step 1/1. Catalyzes the reversible interconversion of serine and glycine with tetrahydrofolate (THF) serving as the one-carbon carrier. This reaction serves as the major source of one-carbon groups required for the biosynthesis of purines, thymidylate, methionine, and other important biomolecules. Also exhibits THF-independent aldolase activity toward beta-hydroxyamino acids, producing glycine and aldehydes, via a retro-aldol mechanism. In Coprothermobacter proteolyticus (strain ATCC 35245 / DSM 5265 / OCM 4 / BT), this protein is Serine hydroxymethyltransferase.